Reading from the N-terminus, the 562-residue chain is Probable malate:quinone oxidoreductase (562 aa).

The disordered stretch occupies residues 530–562 (EVPDKSATPTDPTIAPKHQHSTTHNANSEMQAL). Polar residues predominate over residues 551–562 (TTHNANSEMQAL).

This sequence belongs to the MQO family. FAD is required as a cofactor.

It carries out the reaction (S)-malate + a quinone = a quinol + oxaloacetate. It participates in carbohydrate metabolism; tricarboxylic acid cycle; oxaloacetate from (S)-malate (quinone route): step 1/1. The chain is Probable malate:quinone oxidoreductase from Xylella fastidiosa (strain M12).